A 301-amino-acid polypeptide reads, in one-letter code: DNA repair protein RecO (301 aa).

The interval 272–301 (PTPSGQGSPVAAAAFSEEDSETLGSNLKKL) is disordered.

It belongs to the RecO family.

Functionally, involved in DNA repair and RecF pathway recombination. The polypeptide is DNA repair protein RecO (Synechococcus sp. (strain JA-3-3Ab) (Cyanobacteria bacterium Yellowstone A-Prime)).